Here is a 156-residue protein sequence, read N- to C-terminus: MPRRRVIGQRKILPDPKFKSELLAKFVNILMVDGKKSTAEKIVYTALDSMAEKSGKDHLAIFEEALENVRPAVEVKSRRVGGSTYQVPVEVRPVRRNALAMRWLVEAARKRGEKSMAQRLAAEMLDASENKGTAVKKREDVHRMAEANKAFAHYRW.

The protein belongs to the universal ribosomal protein uS7 family. Part of the 30S ribosomal subunit. Contacts proteins S9 and S11.

Functionally, one of the primary rRNA binding proteins, it binds directly to 16S rRNA where it nucleates assembly of the head domain of the 30S subunit. Is located at the subunit interface close to the decoding center, probably blocks exit of the E-site tRNA. In Vibrio parahaemolyticus serotype O3:K6 (strain RIMD 2210633), this protein is Small ribosomal subunit protein uS7.